The sequence spans 497 residues: Aspartyl/glutamyl-tRNA(Asn/Gln) amidotransferase subunit B (497 aa).

This sequence belongs to the GatB/GatE family. GatB subfamily. As to quaternary structure, heterotrimer of A, B and C subunits.

It catalyses the reaction L-glutamyl-tRNA(Gln) + L-glutamine + ATP + H2O = L-glutaminyl-tRNA(Gln) + L-glutamate + ADP + phosphate + H(+). The catalysed reaction is L-aspartyl-tRNA(Asn) + L-glutamine + ATP + H2O = L-asparaginyl-tRNA(Asn) + L-glutamate + ADP + phosphate + 2 H(+). In terms of biological role, allows the formation of correctly charged Asn-tRNA(Asn) or Gln-tRNA(Gln) through the transamidation of misacylated Asp-tRNA(Asn) or Glu-tRNA(Gln) in organisms which lack either or both of asparaginyl-tRNA or glutaminyl-tRNA synthetases. The reaction takes place in the presence of glutamine and ATP through an activated phospho-Asp-tRNA(Asn) or phospho-Glu-tRNA(Gln). In Cutibacterium acnes (strain DSM 16379 / KPA171202) (Propionibacterium acnes), this protein is Aspartyl/glutamyl-tRNA(Asn/Gln) amidotransferase subunit B.